Reading from the N-terminus, the 141-residue chain is Molybdopterin synthase catalytic subunit 2 (141 aa).

Substrate-binding positions include 37-39 (MIR), 103-104 (HR), Lys119, and 126-128 (KHQ).

It belongs to the MoaE family. Heterotetramer of 2 MoaD subunits and 2 MoaE subunits. Also stable as homodimer. The enzyme changes between these two forms during catalysis.

The enzyme catalyses 2 [molybdopterin-synthase sulfur-carrier protein]-C-terminal-Gly-aminoethanethioate + cyclic pyranopterin phosphate + H2O = molybdopterin + 2 [molybdopterin-synthase sulfur-carrier protein]-C-terminal Gly-Gly + 2 H(+). Its pathway is cofactor biosynthesis; molybdopterin biosynthesis. Its function is as follows. Converts molybdopterin precursor Z into molybdopterin. This requires the incorporation of two sulfur atoms into precursor Z to generate a dithiolene group. The sulfur is provided by MoaD. In Mycobacterium tuberculosis (strain CDC 1551 / Oshkosh), this protein is Molybdopterin synthase catalytic subunit 2 (moaE2).